The following is a 240-amino-acid chain: ATP-dependent dethiobiotin synthetase BioD (240 aa).

Residue 15–20 (EIGKTF) coordinates ATP. A Mg(2+)-binding site is contributed by Thr19. Lys40 is a catalytic residue. ATP contacts are provided by residues Asp57, 118–121 (EGVG), and 178–179 (NR). 2 residues coordinate Mg(2+): Asp57 and Glu118.

It belongs to the dethiobiotin synthetase family. In terms of assembly, homodimer. It depends on Mg(2+) as a cofactor.

It localises to the cytoplasm. It catalyses the reaction (7R,8S)-7,8-diammoniononanoate + CO2 + ATP = (4R,5S)-dethiobiotin + ADP + phosphate + 3 H(+). It participates in cofactor biosynthesis; biotin biosynthesis; biotin from 7,8-diaminononanoate: step 1/2. Its function is as follows. Catalyzes a mechanistically unusual reaction, the ATP-dependent insertion of CO2 between the N7 and N8 nitrogen atoms of 7,8-diaminopelargonic acid (DAPA, also called 7,8-diammoniononanoate) to form a ureido ring. The protein is ATP-dependent dethiobiotin synthetase BioD of Burkholderia mallei (strain NCTC 10247).